The primary structure comprises 395 residues: Phosphopentomutase (395 aa).

Mn(2+)-binding residues include D13, D288, H293, D329, H330, and H341.

It belongs to the phosphopentomutase family. Mn(2+) serves as cofactor.

Its subcellular location is the cytoplasm. The catalysed reaction is 2-deoxy-alpha-D-ribose 1-phosphate = 2-deoxy-D-ribose 5-phosphate. The enzyme catalyses alpha-D-ribose 1-phosphate = D-ribose 5-phosphate. It functions in the pathway carbohydrate degradation; 2-deoxy-D-ribose 1-phosphate degradation; D-glyceraldehyde 3-phosphate and acetaldehyde from 2-deoxy-alpha-D-ribose 1-phosphate: step 1/2. Its function is as follows. Isomerase that catalyzes the conversion of deoxy-ribose 1-phosphate (dRib-1-P) and ribose 1-phosphate (Rib-1-P) to deoxy-ribose 5-phosphate (dRib-5-P) and ribose 5-phosphate (Rib-5-P), respectively. This chain is Phosphopentomutase, found in Agathobacter rectalis (strain ATCC 33656 / DSM 3377 / JCM 17463 / KCTC 5835 / VPI 0990) (Eubacterium rectale).